We begin with the raw amino-acid sequence, 488 residues long: Ribosomal RNA small subunit methyltransferase F (488 aa).

Residues Ala-135 to Lys-141, Glu-159, Asp-186, and Asp-204 contribute to the S-adenosyl-L-methionine site. Cys-257 serves as the catalytic Nucleophile.

The protein belongs to the class I-like SAM-binding methyltransferase superfamily. RsmB/NOP family.

Its subcellular location is the cytoplasm. It carries out the reaction cytidine(1407) in 16S rRNA + S-adenosyl-L-methionine = 5-methylcytidine(1407) in 16S rRNA + S-adenosyl-L-homocysteine + H(+). In terms of biological role, specifically methylates the cytosine at position 1407 (m5C1407) of 16S rRNA. The sequence is that of Ribosomal RNA small subunit methyltransferase F from Shewanella pealeana (strain ATCC 700345 / ANG-SQ1).